The sequence spans 427 residues: UDP-N-acetylglucosamine 1-carboxyvinyltransferase (427 aa).

Residue 22-23 coordinates phosphoenolpyruvate; sequence KN. Arg99 is a UDP-N-acetyl-alpha-D-glucosamine binding site. The active-site Proton donor is the Cys123. Residue Cys123 is modified to 2-(S-cysteinyl)pyruvic acid O-phosphothioketal. Residues 128–132, Asp313, and Ile335 contribute to the UDP-N-acetyl-alpha-D-glucosamine site; that span reads RPIDL.

It belongs to the EPSP synthase family. MurA subfamily.

It is found in the cytoplasm. The catalysed reaction is phosphoenolpyruvate + UDP-N-acetyl-alpha-D-glucosamine = UDP-N-acetyl-3-O-(1-carboxyvinyl)-alpha-D-glucosamine + phosphate. It functions in the pathway cell wall biogenesis; peptidoglycan biosynthesis. Cell wall formation. Adds enolpyruvyl to UDP-N-acetylglucosamine. In Novosphingobium aromaticivorans (strain ATCC 700278 / DSM 12444 / CCUG 56034 / CIP 105152 / NBRC 16084 / F199), this protein is UDP-N-acetylglucosamine 1-carboxyvinyltransferase.